The primary structure comprises 63 residues: MKATELREKSVEELNTELLNLLREQFNLRMQAASGQLQQTHVLKQLRRDVARVKTLLTEKAGA.

It belongs to the universal ribosomal protein uL29 family.

The protein is Large ribosomal subunit protein uL29 of Erwinia tasmaniensis (strain DSM 17950 / CFBP 7177 / CIP 109463 / NCPPB 4357 / Et1/99).